A 311-amino-acid polypeptide reads, in one-letter code: Pyrimidine-specific ribonucleoside hydrolase RihA (311 aa).

Residue H240 is part of the active site.

Belongs to the IUNH family. RihA subfamily.

Hydrolyzes with equal efficiency cytidine or uridine to ribose and cytosine or uracil, respectively. The sequence is that of Pyrimidine-specific ribonucleoside hydrolase RihA from Escherichia coli O45:K1 (strain S88 / ExPEC).